The primary structure comprises 253 residues: 1-(5-phosphoribosyl)-5-[(5-phosphoribosylamino)methylideneamino] imidazole-4-carboxamide isomerase (253 aa).

The active-site Proton acceptor is the aspartate 11. The active-site Proton donor is aspartate 132.

This sequence belongs to the HisA/HisF family.

It localises to the cytoplasm. The enzyme catalyses 1-(5-phospho-beta-D-ribosyl)-5-[(5-phospho-beta-D-ribosylamino)methylideneamino]imidazole-4-carboxamide = 5-[(5-phospho-1-deoxy-D-ribulos-1-ylimino)methylamino]-1-(5-phospho-beta-D-ribosyl)imidazole-4-carboxamide. Its pathway is amino-acid biosynthesis; L-histidine biosynthesis; L-histidine from 5-phospho-alpha-D-ribose 1-diphosphate: step 4/9. This is 1-(5-phosphoribosyl)-5-[(5-phosphoribosylamino)methylideneamino] imidazole-4-carboxamide isomerase from Methylobacterium nodulans (strain LMG 21967 / CNCM I-2342 / ORS 2060).